Reading from the N-terminus, the 300-residue chain is 4-hydroxy-tetrahydrodipicolinate synthase (300 aa).

T56 contributes to the pyruvate binding site. Y145 serves as the catalytic Proton donor/acceptor. K173 (schiff-base intermediate with substrate) is an active-site residue. Residue V215 coordinates pyruvate.

The protein belongs to the DapA family. Homotetramer; dimer of dimers.

Its subcellular location is the cytoplasm. It carries out the reaction L-aspartate 4-semialdehyde + pyruvate = (2S,4S)-4-hydroxy-2,3,4,5-tetrahydrodipicolinate + H2O + H(+). The protein operates within amino-acid biosynthesis; L-lysine biosynthesis via DAP pathway; (S)-tetrahydrodipicolinate from L-aspartate: step 3/4. Catalyzes the condensation of (S)-aspartate-beta-semialdehyde [(S)-ASA] and pyruvate to 4-hydroxy-tetrahydrodipicolinate (HTPA). The chain is 4-hydroxy-tetrahydrodipicolinate synthase from Prochlorococcus marinus (strain AS9601).